We begin with the raw amino-acid sequence, 222 residues long: Peptide methionine sulfoxide reductase MsrA (222 aa).

Cys-60 is a catalytic residue.

Belongs to the MsrA Met sulfoxide reductase family.

It catalyses the reaction L-methionyl-[protein] + [thioredoxin]-disulfide + H2O = L-methionyl-(S)-S-oxide-[protein] + [thioredoxin]-dithiol. The enzyme catalyses [thioredoxin]-disulfide + L-methionine + H2O = L-methionine (S)-S-oxide + [thioredoxin]-dithiol. In terms of biological role, has an important function as a repair enzyme for proteins that have been inactivated by oxidation. Catalyzes the reversible oxidation-reduction of methionine sulfoxide in proteins to methionine. The protein is Peptide methionine sulfoxide reductase MsrA of Pseudomonas entomophila (strain L48).